We begin with the raw amino-acid sequence, 524 residues long: MGMRTKLSLAIFFFFLLALFSNLAFGKCKETEVEEEDPELVTCKHQCQQQQQYTEGDKRVCLQSCDRYHRMKQEREKQIQEETREKKEEESREREEEQQEQHEEQDENPYIFEEDKDFETRVETEGGRIRVLKKFTEKSKLLQGIENFRLAILEARAHTFVSPRHFDSEVVFFNIKGRAVLGLVSESETEKITLEPGDMIHIPAGTPLYIVNRDENDKLFLAMLHIPVSVSTPGKFEEFFAPGGRDPESVLSAFSWNVLQAALQTPKGKLENVFDQQNEGSIFRISREQVRALAPTKKSSWWPFGGESKPQFNIFSKRPTISNGYGRLTEVGPDDDEKSWLQRLNLMLTFTNITQRSMSTIHYNSHATKIALVIDGRGHLQISCPHMSSRSSHSKHDKSSPSYHRISSDLKPGMVFVVPPGHPFVTIASNKENLLMICFEVNARDNKKFTFAGKDNIVSSLDNVAKELAFNYPSEMVNGVFLLQRFLERKLIGRLYHLPHKDRKESFFFPFELPREERGRRADA.

An N-terminal signal peptide occupies residues 1 to 29 (MGMRTKLSLAIFFFFLLALFSNLAFGKCK). The segment covering 73-102 (QEREKQIQEETREKKEEESREREEEQQEQH) has biased composition (basic and acidic residues). Positions 73-107 (QEREKQIQEETREKKEEESREREEEQQEQHEEQDE) are disordered. 2 consecutive Cupin type-1 domains span residues 110 to 271 (YIFE…GKLE) and 312 to 478 (FNIF…EMVN). The tract at residues 384–404 (CPHMSSRSSHSKHDKSSPSYH) is disordered.

Associated with the plasma membrane of several cell types engaged in sucrose transport, including the mesophyll cells of young sink leaves, the companion cells of mature phloem and the cells of developing cotyledons.

The protein resides in the membrane. Plays a role in sucrose transport. The polypeptide is Sucrose-binding protein (SBP) (Glycine max (Soybean)).